The following is a 342-amino-acid chain: Cyclin-dependent kinase-like 4 (342 aa).

In terms of domain architecture, Protein kinase spans 4–286 (YEKLAKIGEG…CAQLLDSAYF (283 aa)). Residues 10–18 (IGEGSYGVV) and Lys-33 each bind ATP. The [NKR]KIAxRE signature appears at 45–51 (RKIALRE). The Proton acceptor role is filled by Asp-126. The interval 295–328 (KRKARSEGRSRRRQQNQLLPLIPGSHISPTPDGR) is disordered.

It belongs to the protein kinase superfamily. CMGC Ser/Thr protein kinase family. CDC2/CDKX subfamily.

The protein resides in the cytoplasm. The enzyme catalyses L-seryl-[protein] + ATP = O-phospho-L-seryl-[protein] + ADP + H(+). The catalysed reaction is L-threonyl-[protein] + ATP = O-phospho-L-threonyl-[protein] + ADP + H(+). The protein is Cyclin-dependent kinase-like 4 (Cdkl4) of Mus musculus (Mouse).